The following is a 170-amino-acid chain: uncharacterized protein (170 aa).

This is an uncharacterized protein from Saccharomyces cerevisiae (strain ATCC 204508 / S288c) (Baker's yeast).